An 82-amino-acid chain; its full sequence is Protein Vpu (82 aa).

Topologically, residues 1-7 are extracellular; it reads MQPIPIV. A helical transmembrane segment spans residues 8-28; that stretch reads AIVALVVAIIIAIVVWSIVII. Residues 29–82 lie on the Cytoplasmic side of the membrane; that stretch reads EYRKILRQRKIDRLIDRLIERAEDSGNESEGEISALVEMGVEMGHHAPWDVDDL. Phosphoserine; by host CK2 occurs at positions 53 and 57.

It belongs to the HIV-1 VPU protein family. As to quaternary structure, homopentamer. Interacts with host CD4 and BRTC; these interactions induce proteasomal degradation of CD4. Interacts (via transmembrane region) with host BST2 (via transmembrane region); this interaction leads to the degradation of host BST2. Interacts with host FBXW11. Interacts with host AP1M1; this interaction plays a role in the mistrafficking and subsequent degradation of host BST2. Interacts with host RANBP2; this interaction allows Vpu to down-regulate host BLM sumoylation. In terms of processing, phosphorylated by host CK2. This phosphorylation is necessary for interaction with human BTRC and degradation of CD4.

The protein resides in the host membrane. Ion channel activity is inhibited by hexamethylene amiloride in vitro. Functionally, enhances virion budding by targeting host CD4 and Tetherin/BST2 to proteasome degradation. Degradation of CD4 prevents any unwanted premature interactions between viral Env and its host receptor CD4 in the endoplasmic reticulum. Degradation of antiretroviral protein Tetherin/BST2 is important for virion budding, as BST2 tethers new viral particles to the host cell membrane. Mechanistically, Vpu bridges either CD4 or BST2 to BTRC, a substrate recognition subunit of the Skp1/Cullin/F-box protein E3 ubiquitin ligase, induces their ubiquitination and subsequent proteasomal degradation. The alteration of the E3 ligase specificity by Vpu seems to promote the degradation of host IKBKB, leading to NF-kappa-B down-regulation and subsequent apoptosis. Acts as a viroporin that forms an oligomeric ion channel in membranes. Modulates the host DNA repair mechanisms to promote degradation of nuclear viral cDNA in cells that are already productively infected in order to suppress immune sensing and proviral hyper-integration (superinfection). Manipulates PML-NBs and modulates SUMOylation of host BLM protein thereby enhancing its DNA-end processing activity toward viral unintegrated linear DNA. Also inhibits RAD52-mediated homologous repair of viral cDNA, preventing the generation of dead-end circular forms of single copies of the long terminal repeat and permitting sustained nucleolytic attack. The protein is Protein Vpu of Human immunodeficiency virus type 1 group M subtype B (isolate HXB2) (HIV-1).